A 148-amino-acid polypeptide reads, in one-letter code: Stathmin (148 aa).

The SLD domain occupies 4–145 (SDIQVKELEK…NKEGKDPGEA (142 aa)). At S16 the chain carries Phosphoserine; by PKA. S38 carries the phosphoserine; by CDK1 modification. A coiled-coil region spans residues 41–140 (KKKDLSLEEI…EEVRKNKEGK (100 aa)). Residue S63 is modified to Phosphoserine; by PKA. The disordered stretch occupies residues 122–148 (RLREKDKHIEEVRKNKEGKDPGEAETN).

This sequence belongs to the stathmin family. Binds to two alpha/beta-tubulin heterodimers. In terms of processing, many different phosphorylated forms are observed depending on specific combinations among the sites which can be phosphorylated. MAPK is responsible for the phosphorylation of stathmin in response to NGF.

It localises to the cytoplasm. The protein localises to the cytoskeleton. Its function is as follows. Involved in the regulation of the microtubule (MT) filament system by destabilizing microtubules. It prevents assembly and promotes disassembly of microtubules. This Gallus gallus (Chicken) protein is Stathmin (STMN1).